The sequence spans 296 residues: GTPase Era (296 aa).

Residues 7 to 174 (RTGFVAVVGR…LDEIAARLPE (168 aa)) form the Era-type G domain. A G1 region spans residues 15 to 22 (GRPNVGKS). Position 15–22 (15–22 (GRPNVGKS)) interacts with GTP. The tract at residues 41 to 45 (QTTRH) is G2. The segment at 62–65 (DTPG) is G3. GTP contacts are provided by residues 62 to 66 (DTPGF) and 123 to 126 (SKID). A G4 region spans residues 123–126 (SKID). The tract at residues 153-155 (VSA) is G5. Residues 205–281 (VGDELPYGCT…HLEVYIKVRK (77 aa)) form the KH type-2 domain.

This sequence belongs to the TRAFAC class TrmE-Era-EngA-EngB-Septin-like GTPase superfamily. Era GTPase family. In terms of assembly, monomer.

It is found in the cytoplasm. The protein localises to the cell inner membrane. An essential GTPase that binds both GDP and GTP, with rapid nucleotide exchange. Plays a role in 16S rRNA processing and 30S ribosomal subunit biogenesis and possibly also in cell cycle regulation and energy metabolism. The polypeptide is GTPase Era (Bordetella petrii (strain ATCC BAA-461 / DSM 12804 / CCUG 43448)).